A 264-amino-acid chain; its full sequence is 3-methyl-2-oxobutanoate hydroxymethyltransferase (264 aa).

D45 and D84 together coordinate Mg(2+). Residues 45 to 46 (DS), D84, and K113 each bind 3-methyl-2-oxobutanoate. E115 serves as a coordination point for Mg(2+). Catalysis depends on E182, which acts as the Proton acceptor.

Belongs to the PanB family. As to quaternary structure, homodecamer; pentamer of dimers. Requires Mg(2+) as cofactor.

The protein localises to the cytoplasm. The enzyme catalyses 3-methyl-2-oxobutanoate + (6R)-5,10-methylene-5,6,7,8-tetrahydrofolate + H2O = 2-dehydropantoate + (6S)-5,6,7,8-tetrahydrofolate. The protein operates within cofactor biosynthesis; (R)-pantothenate biosynthesis; (R)-pantoate from 3-methyl-2-oxobutanoate: step 1/2. Functionally, catalyzes the reversible reaction in which hydroxymethyl group from 5,10-methylenetetrahydrofolate is transferred onto alpha-ketoisovalerate to form ketopantoate. This Helicobacter hepaticus (strain ATCC 51449 / 3B1) protein is 3-methyl-2-oxobutanoate hydroxymethyltransferase.